Consider the following 456-residue polypeptide: Molybdate transporter 1 (456 aa).

The next 9 membrane-spanning stretches (helical) occupy residues 67–87 (LIFTGIYNAITGAVYGVPMPV), 110–130 (IMAAGICTGGILFVLGISGLM), 133–153 (VFNIIPLSVVRGIQLSQGLAF), 177–197 (PWLGLDGLVLALVCVLFIVLV), 225–245 (VIANVPSALLIFLLGVVLAFI), 309–329 (AASVSMTVGLMNMVGCWFGAM), 354–374 (LLGVAKLVLGLVLGGSLVGIL), 377–397 (FPVGVLGALLLFAGVELAMAA), and 417–437 (LGSNAAIGFVAGDLLYVVLWM).

The protein belongs to the SLC26A/SulP transporter (TC 2.A.53) family. Strongly expressed in roots. Detected in the vascular tissues of hypocotyls, in petioles and vascular tissues of cotyledons and leaves, in mesophyll cells, stamen, sepals and siliques.

Its subcellular location is the cell membrane. The protein localises to the endomembrane system. It is found in the mitochondrion membrane. Its activity is regulated as follows. Not inhibited by sulfate. High affinity molybdate transporter. Unable to transport sulfate. The sequence is that of Molybdate transporter 1 (MOT1) from Arabidopsis thaliana (Mouse-ear cress).